We begin with the raw amino-acid sequence, 393 residues long: Lipid-A-disaccharide synthase (393 aa).

It belongs to the LpxB family.

The catalysed reaction is a lipid X + a UDP-2-N,3-O-bis[(3R)-3-hydroxyacyl]-alpha-D-glucosamine = a lipid A disaccharide + UDP + H(+). It participates in bacterial outer membrane biogenesis; LPS lipid A biosynthesis. Its function is as follows. Condensation of UDP-2,3-diacylglucosamine and 2,3-diacylglucosamine-1-phosphate to form lipid A disaccharide, a precursor of lipid A, a phosphorylated glycolipid that anchors the lipopolysaccharide to the outer membrane of the cell. This Bordetella pertussis (strain Tohama I / ATCC BAA-589 / NCTC 13251) protein is Lipid-A-disaccharide synthase.